The following is a 165-amino-acid chain: Protein YELLOW LEAF 1, choloroplastic (165 aa).

Residues 1–51 (MPPLATMSSPGSLLLLTPAVYQGIGRNRGGQSQEGQSISSSRSLKTKLSVS) constitute a chloroplast transit peptide. A disordered region spans residues 71–118 (TQTARRKSFSGPTSPPSGSVKEKVRSPKLDDGGTGFPPFRFGGGGGGG). A compositionally biased stretch (low complexity) spans 79–89 (FSGPTSPPSGS). Residues 90–101 (VKEKVRSPKLDD) are compositionally biased toward basic and acidic residues.

As to quaternary structure, interacts with atpB. As to expression, highly expressed in leaves. Expressed in leaf sheaths. Expressed at low levels in stems.

Its subcellular location is the plastid. The protein resides in the chloroplast. In terms of biological role, required for photosynthetic protein complex assembly in chloroplast thylakoid membranes during leaf development. Maintains the abundance of the core protein complex PsaA-PsaB of photosystem I (PSI) in the thylakoid membrane. May play a role in the efficient biogenesis of the chloroplast ATP synthase complex, possibly by interacting with the beta subunit atpB. The protein is Protein YELLOW LEAF 1, choloroplastic of Oryza sativa subsp. japonica (Rice).